A 348-amino-acid chain; its full sequence is MTAPSQVLKIRRPDDWHLHLRDGDMLKTVVPYSSEIYARAIVMPNLAPPVTTVDAAIAYRQRILAAVPAGHNFTPLMTCYLTDSLDPDELERGFQQGVFTAAKLYPANATTNSSHGVTSTAAIMPVLERMEKIGMPLLVHGEVTHADIDIFDREARFIDTVMEPLRKQLPGLKVVFEHITTKDAADYVREGNDQLAATITPQHLMFNRNHMLVGGIRPHLYCLPILKRNVHQQALRELVASGFERVFLGTDSAPHARHRKEASCGCAGCFNAPTALGSYATVFEEMNALQHLEAFCSLNGPKFYGLPVNDSFIELERRESQVPDNIALNDDSLIPFLAGETIHWSVKK.

Residues His-17 and His-19 each coordinate Zn(2+). Residues His-19 to Arg-21 and Asn-45 contribute to the substrate site. The Zn(2+) site is built by Lys-103, His-140, and His-178. Residue Lys-103 is modified to N6-carboxylysine. His-140 is a substrate binding site. Leu-223 is a substrate binding site. Position 251 (Asp-251) interacts with Zn(2+). The active site involves Asp-251. Substrate is bound by residues His-255 and Ala-267.

Belongs to the metallo-dependent hydrolases superfamily. DHOase family. Class II DHOase subfamily. In terms of assembly, homodimer. Zn(2+) serves as cofactor.

It carries out the reaction (S)-dihydroorotate + H2O = N-carbamoyl-L-aspartate + H(+). It participates in pyrimidine metabolism; UMP biosynthesis via de novo pathway; (S)-dihydroorotate from bicarbonate: step 3/3. In terms of biological role, catalyzes the reversible cyclization of carbamoyl aspartate to dihydroorotate. This Escherichia fergusonii (strain ATCC 35469 / DSM 13698 / CCUG 18766 / IAM 14443 / JCM 21226 / LMG 7866 / NBRC 102419 / NCTC 12128 / CDC 0568-73) protein is Dihydroorotase.